The chain runs to 77 residues: UPF0401 protein ECP_3010 (77 aa).

Belongs to the UPF0401 family.

In Escherichia coli O6:K15:H31 (strain 536 / UPEC), this protein is UPF0401 protein ECP_3010.